We begin with the raw amino-acid sequence, 132 residues long: PGA2-homolog C27.01c (132 aa).

A helical transmembrane segment spans residues 17–34 (WIRIIVYVGGYMLIRPYL). 2 disordered regions span residues 50–90 (LLEG…DAEF) and 106–132 (EYFKNQDKSPLDAYADDDEDIEEHLED). Over residues 62–75 (EMTHGTKPKEHGEF) the composition is skewed to basic and acidic residues. Positions 76 to 87 (DTDDEEEEENPD) are enriched in acidic residues. Thr-77 is modified (phosphothreonine). Basic and acidic residues predominate over residues 106 to 115 (EYFKNQDKSP). A compositionally biased stretch (acidic residues) spans 119–132 (YADDDEDIEEHLED).

This sequence belongs to the PGA2 family.

It is found in the endoplasmic reticulum membrane. Its subcellular location is the nucleus membrane. In terms of biological role, involved processing and trafficking glycosylated proteins. The polypeptide is PGA2-homolog C27.01c (Schizosaccharomyces pombe (strain 972 / ATCC 24843) (Fission yeast)).